The following is a 626-amino-acid chain: MADQRMDISSTISDFMSPGPTDLLSSSLGTSGVDCNRKRKGSSTDYQESMDTDKDDPHGRLEYTEHQGRIKNAREAHSQIEKRRRDKMNSFIDELASLVPTCNAMSRKLDKLTVLRMAVQHMKTLRGATNPYTEANYKPTFLSDDELKHLILRAADGFLFVVGCDRGKILFVSESVFKILNYSQNDLIGQSLFDYLHPKDIAKVKEQLSSSDTAPRERLIDAKTGLPVKTDITPGPSRLCSGARRSFFCRMKCNRPSVKVEDKDFPSTCSKKKADRKSFCTIHSTGYLKSWPPTKMGLDEDNEPDNEGCNLSCLVAIGRLHSHVVPQPVNGEIRVKSMEYVSRHAIDGKFVFVDQRATAILAYLPQELLGTSCYEYFHQDDIGHLAECHRQVLQTREKITTNCYKFKIKDGSFITLRSRWFSFMNPWTKEVEYIVSTNTVVLANVLEGGDPTFPQLTASPHSMDSMLPSGEGGPKRTHPTVPGIPGGTRAGAGKIGRMIAEEIMEIHRIRGSSPSSCGSSPLNITSTPPPDASSPGGKKILNGGTPDIPSSGLLSGQAQENPGYPYSDSSSILGENPHIGIDMIDNDQGSSSPSNDEAAMAVIMSLLEADAGLGGPVDFSDLPWPL.

The interval 1–60 (MADQRMDISSTISDFMSPGPTDLLSSSLGTSGVDCNRKRKGSSTDYQESMDTDKDDPHGR) is disordered. Serine 17 carries the post-translational modification Phosphoserine; by GSK3-beta. A compositionally biased stretch (low complexity) spans 17-32 (SPGPTDLLSSSLGTSG). Threonine 21 carries the post-translational modification Phosphothreonine; by GSK3-beta. A Nuclear localization signal motif is present at residues 36–41 (NRKRKG). Positions 51–60 (DTDKDDPHGR) are enriched in basic and acidic residues. Residues 72–125 (NAREAHSQIEKRRRDKMNSFIDELASLVPTCNAMSRKLDKLTVLRMAVQHMKTL) form the bHLH domain. At serine 78 the chain carries Phosphoserine. Serine 90 is modified (phosphoserine; by CK2). The Nuclear export signal 1 signature appears at 142-152 (LSDDELKHLIL). The PAS 1 domain occupies 143–215 (SDDELKHLIL…EQLSSSDTAP (73 aa)). A Glycyl lysine isopeptide (Lys-Gly) (interchain with G-Cter in SUMO2 and SUMO3) cross-link involves residue lysine 252. A Glycyl lysine isopeptide (Lys-Gly) (interchain with G-Cter in SUMO2) cross-link involves residue lysine 259. The PAS 2 domain maps to 326 to 396 (PQPVNGEIRV…ECHRQVLQTR (71 aa)). A Nuclear export signal 2 motif is present at residues 361-369 (LAYLPQELL). Positions 401 to 444 (TNCYKFKIKDGSFITLRSRWFSFMNPWTKEVEYIVSTNTVVLAN) constitute a PAC domain. Disordered stretches follow at residues 458 to 493 (ASPH…AGAG) and 511 to 595 (GSSP…SPSN). Positions 484 to 493 (IPGGTRAGAG) are enriched in gly residues. Positions 508–588 (RIRGSSPSSC…IGIDMIDNDQ (81 aa)) are interaction with CIART. Residues 511 to 521 (GSSPSSCGSSP) show a composition bias toward low complexity. Lysine 538 carries the post-translational modification N6-acetyllysine.

Component of the circadian clock oscillator which includes the CRY1/2 proteins, CLOCK or NPAS2,BMAL1 or BMAL2, CSNK1D and/or CSNK1E, TIMELESS and the PER1/2/3 proteins. Forms a heterodimer with CLOCK. The CLOCK-BMAL1 heterodimer is required for E-box-dependent transactivation, for CLOCK nuclear translocation and degradation, and, for phosphorylation of both CLOCK and BMAL1. Part of a nuclear complex which also includes RACK1 and PRKCA; RACK1 and PRKCA are recruited to the complex in a circadian manner. Interacts with NPAS2. Interacts with EZH2. Interacts with SUMO3. Interacts with SIRT1. Interacts with AHR. Interacts with ID1, ID2 and ID3. Interacts with DDX4. Interacts with OGT. Interacts with EED and SUZ12. Interacts with MTA1. Interacts with CIART. Interacts with HSP90. Interacts with KAT2B and EP300. Interacts with BHLHE40/DEC1 and BHLHE41/DEC2. Interacts with RELB and the interaction is enhanced in the presence of CLOCK. Interacts with PER1, PER2, CRY1 and CRY2 and this interaction requires a translocation to the nucleus. Interaction of the CLOCK-BMAL1 heterodimer with PER or CRY inhibits transcription activation. Interaction of the CLOCK-BMAL1 with CRY1 is independent of DNA but with PER2 is off DNA. The CLOCK-BMAL1 heterodimer interacts with GSK3B. Interacts with KDM5A. Interacts with KMT2A; in a circadian manner. Interacts with UBE3A. Interacts with PRKCG. Interacts with MAGEL2. Interacts with NCOA2. Interacts with THRAP3. The CLOCK-BMAL1 heterodimer interacts with PASD1. Interacts with PASD1. Interacts with USP9X. Interacts with PIWIL2 (via PIWI domain). Interacts with HDAC3. Interacts with HNF4A. In terms of processing, ubiquitinated, leading to its proteasomal degradation. Deubiquitinated by USP9X. O-glycosylated; contains O-GlcNAc. O-glycosylation by OGT prevents protein degradation by inhibiting ubiquitination. It also stabilizes the CLOCK-BMAL1 heterodimer thereby increasing CLOCK-BMAL1-mediated transcription of genes in the negative loop of the circadian clock such as PER1/2/3 and CRY1/2. Post-translationally, acetylated on Lys-538 by CLOCK during the repression phase of the circadian cycle. Acetylation facilitates recruitment of CRY1 protein and initiates the repression phase of the circadian cycle. Acetylated at Lys-538 by KAT5 during the activation phase of the cycle, leading to recruitment of the positive transcription elongation factor b (P-TEFb) and BRD4, followed by productive elongation of circadian transcripts. Deacetylated by SIRT1, which may result in decreased protein stability. In terms of processing, phosphorylated upon dimerization with CLOCK. Phosphorylation enhances the transcriptional activity, alters the subcellular localization and decreases the stability of the CLOCK-BMAL1 heterodimer by promoting its degradation. Phosphorylation shows circadian variations in the liver with a peak between CT10 to CT14. Phosphorylation at Ser-90 by CK2 is essential for its nuclear localization, its interaction with CLOCK and controls CLOCK nuclear entry. Dephosphorylation at Ser-78 is important for dimerization with CLOCK and transcriptional activity. Sumoylated on Lys-259 upon dimerization with CLOCK. Predominantly conjugated to poly-SUMO2/3 rather than SUMO1 and the level of these conjugates undergo rhythmic variation, peaking at CT9-CT12. Sumoylation localizes it exclusively to the PML body and promotes its ubiquitination in the PML body, ubiquitin-dependent proteasomal degradation and the transcriptional activity of the CLOCK-BMAL1 heterodimer. Post-translationally, undergoes lysosome-mediated degradation in a time-dependent manner in the liver. As to expression, hair follicles (at protein level). Highly expressed in the adult brain, skeletal muscle and heart.

The protein resides in the nucleus. It is found in the cytoplasm. It localises to the PML body. With respect to regulation, there is conflicting data about the effect of NAD cofactors on activity. PubMed:11441146 suggests that the redox state of the cell can modulate the transcriptional activity of the CLOCK-BMAL1 heterodimer; NADH and NADPH enhance the DNA-binding activity of the heterodimer. PubMed:23229515 reports that NADH and NADPH have no significant effect on DNA-binding activity of the CLOCK-BMAL1 heterodimer. Transcriptional activator which forms a core component of the circadian clock. The circadian clock, an internal time-keeping system, regulates various physiological processes through the generation of approximately 24 hour circadian rhythms in gene expression, which are translated into rhythms in metabolism and behavior. It is derived from the Latin roots 'circa' (about) and 'diem' (day) and acts as an important regulator of a wide array of physiological functions including metabolism, sleep, body temperature, blood pressure, endocrine, immune, cardiovascular, and renal function. Consists of two major components: the central clock, residing in the suprachiasmatic nucleus (SCN) of the brain, and the peripheral clocks that are present in nearly every tissue and organ system. Both the central and peripheral clocks can be reset by environmental cues, also known as Zeitgebers (German for 'timegivers'). The predominant Zeitgeber for the central clock is light, which is sensed by retina and signals directly to the SCN. The central clock entrains the peripheral clocks through neuronal and hormonal signals, body temperature and feeding-related cues, aligning all clocks with the external light/dark cycle. Circadian rhythms allow an organism to achieve temporal homeostasis with its environment at the molecular level by regulating gene expression to create a peak of protein expression once every 24 hours to control when a particular physiological process is most active with respect to the solar day. Transcription and translation of core clock components (CLOCK, NPAS2, BMAL1, BMAL2, PER1, PER2, PER3, CRY1 and CRY2) plays a critical role in rhythm generation, whereas delays imposed by post-translational modifications (PTMs) are important for determining the period (tau) of the rhythms (tau refers to the period of a rhythm and is the length, in time, of one complete cycle). A diurnal rhythm is synchronized with the day/night cycle, while the ultradian and infradian rhythms have a period shorter and longer than 24 hours, respectively. Disruptions in the circadian rhythms contribute to the pathology of cardiovascular diseases, cancer, metabolic syndromes and aging. A transcription/translation feedback loop (TTFL) forms the core of the molecular circadian clock mechanism. Transcription factors, CLOCK or NPAS2 and BMAL1 or BMAL2, form the positive limb of the feedback loop, act in the form of a heterodimer and activate the transcription of core clock genes and clock-controlled genes (involved in key metabolic processes), harboring E-box elements (5'-CACGTG-3') within their promoters. The core clock genes: PER1/2/3 and CRY1/2 which are transcriptional repressors form the negative limb of the feedback loop and interact with the CLOCK|NPAS2-BMAL1|BMAL2 heterodimer inhibiting its activity and thereby negatively regulating their own expression. This heterodimer also activates nuclear receptors NR1D1/2 and RORA/B/G, which form a second feedback loop and which activate and repress BMAL1 transcription, respectively. BMAL1 positively regulates myogenesis and negatively regulates adipogenesis via the transcriptional control of the genes of the canonical Wnt signaling pathway. Plays a role in normal pancreatic beta-cell function; regulates glucose-stimulated insulin secretion via the regulation of antioxidant genes NFE2L2/NRF2 and its targets SESN2, PRDX3, CCLC and CCLM. Negatively regulates the mTORC1 signaling pathway; regulates the expression of MTOR and DEPTOR. Controls diurnal oscillations of Ly6C inflammatory monocytes; rhythmic recruitment of the PRC2 complex imparts diurnal variation to chemokine expression that is necessary to sustain Ly6C monocyte rhythms. Regulates the expression of HSD3B2, STAR, PTGS2, CYP11A1, CYP19A1 and LHCGR in the ovary and also the genes involved in hair growth. Plays an important role in adult hippocampal neurogenesis by regulating the timely entry of neural stem/progenitor cells (NSPCs) into the cell cycle and the number of cell divisions that take place prior to cell-cycle exit. Regulates the circadian expression of CIART and KLF11. The CLOCK-BMAL1 heterodimer regulates the circadian expression of SERPINE1/PAI1, VWF, B3, CCRN4L/NOC, NAMPT, DBP, MYOD1, PPARGC1A, PPARGC1B, SIRT1, GYS2, F7, NGFR, GNRHR, BHLHE40/DEC1, ATF4, MTA1, KLF10 and also genes implicated in glucose and lipid metabolism. Promotes rhythmic chromatin opening, regulating the DNA accessibility of other transcription factors. The NPAS2-BMAL1 heterodimer positively regulates the expression of MAOA, F7 and LDHA and modulates the circadian rhythm of daytime contrast sensitivity by regulating the rhythmic expression of adenylate cyclase type 1 (ADCY1) in the retina. The preferred binding motif for the CLOCK-BMAL1 heterodimer is 5'-CACGTGA-3', which contains a flanking adenine nucleotide at the 3-prime end of the canonical 6-nucleotide E-box sequence. CLOCK specifically binds to the half-site 5'-CAC-3', while BMAL1 binds to the half-site 5'-GTGA-3'. The CLOCK-BMAL1 heterodimer also recognizes the non-canonical E-box motifs 5'-AACGTGA-3' and 5'-CATGTGA-3'. Essential for the rhythmic interaction of CLOCK with ASS1 and plays a critical role in positively regulating CLOCK-mediated acetylation of ASS1. Plays a role in protecting against lethal sepsis by limiting the expression of immune checkpoint protein CD274 in macrophages in a PKM2-dependent manner. Regulates the diurnal rhythms of skeletal muscle metabolism via transcriptional activation of genes promoting triglyceride synthesis (DGAT2) and metabolic efficiency (COQ10B). Its function is as follows. (Microbial infection) Regulates SARS coronavirus-2/SARS-CoV-2 entry and replication in lung epithelial cells probably through the post-transcriptional regulation of ACE2 and interferon-stimulated gene expression. The chain is Basic helix-loop-helix ARNT-like protein 1 from Homo sapiens (Human).